A 399-amino-acid polypeptide reads, in one-letter code: F420-dependent formate dehydrogenase subunit beta (399 aa).

4Fe-4S ferredoxin-type domains are found at residues T287 to P307 and E339 to I367. Positions 296, 299, 302, 306, 348, 351, 354, and 358 each coordinate [4Fe-4S] cluster.

Belongs to the FrhB family. Dimer of an alpha (FdhA) and a beta (FdhB) subunit. [4Fe-4S] cluster serves as cofactor. Requires FAD as cofactor. It depends on Zn(2+) as a cofactor.

It catalyses the reaction oxidized coenzyme F420-(gamma-L-Glu)(n) + formate + 2 H(+) = reduced coenzyme F420-(gamma-L-Glu)(n) + CO2. Is extremely sensitive to oxygen. Contains a FAD that is required for coenzyme F420-dependent activity but not for methyl viologen-dependent activity. Preincubation of the FAD-depleted enzyme with FAD restores coenzyme F420-dependent activity. Neither FMN nor FADH2 can replace FAD. Strongly inhibited by cyanide, azide, alpha,alpha-dipyridyl and 1,10-phenanthroline. Functionally, catalyzes the oxidation of formate to carbon dioxide, with coenzyme F420 as the electron acceptor. In vitro can also use methyl viologen, 7,8-didemethyl-8-hydroxy-5-deazariboflavin (or FO, a hydrolytic derivative of coenzyme F420), FMN and FAD as electron acceptors, but not NAD(+) or NADP(+). In Methanobacterium formicicum, this protein is F420-dependent formate dehydrogenase subunit beta.